We begin with the raw amino-acid sequence, 152 residues long: uncharacterized protein (152 aa).

At 1–5 (MWFPQ) the chain is on the cytoplasmic side. A helical membrane pass occupies residues 6-26 (IIAGMAAGGAASAMTPGKVLF). Residues 27–38 (TNALGLGCSRSR) are Extracellular-facing. Residues 39-59 (GLFLEMFGTAVLCFTVLMTAV) form a helical membrane-spanning segment. Residues 60–65 (EKRETN) are Cytoplasmic-facing. The helical transmembrane segment at 66 to 86 (FMAALPIGISLFMAHMALTGY) threads the bilayer. Over 87–110 (TGTGVNPARSLGAAVAARYFPHYH) the chain is Extracellular. An NPA motif is present at residues 92 to 94 (NPA). A helical transmembrane segment spans residues 111-131 (WIYWISPLLGAFLAWSVWQLL). Residues 132-152 (QILDYTTYVNAEKAAGQKKED) lie on the Cytoplasmic side of the membrane.

It belongs to the MIP/aquaporin (TC 1.A.8) family.

It is found in the membrane. This is an uncharacterized protein from Saccharomyces cerevisiae (strain YJM789) (Baker's yeast).